Here is a 185-residue protein sequence, read N- to C-terminus: Peptidyl-tRNA hydrolase (185 aa).

Tyrosine 14 provides a ligand contact to tRNA. Residue histidine 19 is the Proton acceptor of the active site. 3 residues coordinate tRNA: phenylalanine 63, asparagine 65, and asparagine 111.

Belongs to the PTH family. Monomer.

The protein resides in the cytoplasm. The catalysed reaction is an N-acyl-L-alpha-aminoacyl-tRNA + H2O = an N-acyl-L-amino acid + a tRNA + H(+). Hydrolyzes ribosome-free peptidyl-tRNAs (with 1 or more amino acids incorporated), which drop off the ribosome during protein synthesis, or as a result of ribosome stalling. In terms of biological role, catalyzes the release of premature peptidyl moieties from peptidyl-tRNA molecules trapped in stalled 50S ribosomal subunits, and thus maintains levels of free tRNAs and 50S ribosomes. In Desulfitobacterium hafniense (strain Y51), this protein is Peptidyl-tRNA hydrolase.